A 162-amino-acid polypeptide reads, in one-letter code: ATP synthase subunit b (162 aa).

Residues 8–28 (LTGIIQLLNFLILLFVLYKFL) traverse the membrane as a helical segment.

Belongs to the ATPase B chain family. In terms of assembly, F-type ATPases have 2 components, F(1) - the catalytic core - and F(0) - the membrane proton channel. F(1) has five subunits: alpha(3), beta(3), gamma(1), delta(1), epsilon(1). F(0) has three main subunits: a(1), b(2) and c(10-14). The alpha and beta chains form an alternating ring which encloses part of the gamma chain. F(1) is attached to F(0) by a central stalk formed by the gamma and epsilon chains, while a peripheral stalk is formed by the delta and b chains.

Its subcellular location is the cell inner membrane. In terms of biological role, f(1)F(0) ATP synthase produces ATP from ADP in the presence of a proton or sodium gradient. F-type ATPases consist of two structural domains, F(1) containing the extramembraneous catalytic core and F(0) containing the membrane proton channel, linked together by a central stalk and a peripheral stalk. During catalysis, ATP synthesis in the catalytic domain of F(1) is coupled via a rotary mechanism of the central stalk subunits to proton translocation. Component of the F(0) channel, it forms part of the peripheral stalk, linking F(1) to F(0). The polypeptide is ATP synthase subunit b (Pseudothermotoga lettingae (strain ATCC BAA-301 / DSM 14385 / NBRC 107922 / TMO) (Thermotoga lettingae)).